A 151-amino-acid polypeptide reads, in one-letter code: Phosphoribosyl-AMP cyclohydrolase (151 aa).

Aspartate 94 lines the Mg(2+) pocket. Cysteine 95 provides a ligand contact to Zn(2+). The Mg(2+) site is built by aspartate 96 and aspartate 98. Residues cysteine 112 and cysteine 119 each contribute to the Zn(2+) site.

This sequence belongs to the PRA-CH family. Homodimer. It depends on Mg(2+) as a cofactor. Zn(2+) serves as cofactor.

It is found in the cytoplasm. It carries out the reaction 1-(5-phospho-beta-D-ribosyl)-5'-AMP + H2O = 1-(5-phospho-beta-D-ribosyl)-5-[(5-phospho-beta-D-ribosylamino)methylideneamino]imidazole-4-carboxamide. The protein operates within amino-acid biosynthesis; L-histidine biosynthesis; L-histidine from 5-phospho-alpha-D-ribose 1-diphosphate: step 3/9. Its function is as follows. Catalyzes the hydrolysis of the adenine ring of phosphoribosyl-AMP. This Rhodopseudomonas palustris (strain TIE-1) protein is Phosphoribosyl-AMP cyclohydrolase.